A 223-amino-acid chain; its full sequence is Ribose-5-phosphate isomerase A (223 aa).

Substrate is bound by residues 28–31 (TGST), 81–84 (DGTD), and 94–97 (KGGG). Glutamate 103 functions as the Proton acceptor in the catalytic mechanism. Lysine 121 serves as a coordination point for substrate.

Belongs to the ribose 5-phosphate isomerase family. Homodimer.

It catalyses the reaction aldehydo-D-ribose 5-phosphate = D-ribulose 5-phosphate. The protein operates within carbohydrate degradation; pentose phosphate pathway; D-ribose 5-phosphate from D-ribulose 5-phosphate (non-oxidative stage): step 1/1. Functionally, catalyzes the reversible conversion of ribose-5-phosphate to ribulose 5-phosphate. The polypeptide is Ribose-5-phosphate isomerase A (Baumannia cicadellinicola subsp. Homalodisca coagulata).